A 1153-amino-acid polypeptide reads, in one-letter code: PPi-type phosphoenolpyruvate carboxykinase 3 (1153 aa).

Positions 1085 to 1131 (RQKLEVAKLNKDLAYLNKTIAEKPRLAETLNKQIAAVKEELQYVSSE) form a coiled coil.

It belongs to the PPi-type phosphoenolpyruvate carboxykinase family. Monomer and trimer; forms heterotrimers with PEPCK1 and PEPCK2.

It localises to the cytoplasm. It is found in the cytosol. The catalysed reaction is oxaloacetate + diphosphate = phosphoenolpyruvate + phosphate + CO2. Inorganic pyrophosphate (PPi)-dependent phosphoenolpyruvate carboxykinase, which regulates the carbon flow of the central metabolism by fixing CO(2) to phosphoenolpyruvate to produce oxaloacetate. Can also produce pyruvate and diphosphate from phosphoenolpyruvate and phosphate. The chain is PPi-type phosphoenolpyruvate carboxykinase 3 from Entamoeba histolytica (strain ATCC 30459 / HM-1:IMSS / ABRM).